The chain runs to 151 residues: Large ribosomal subunit protein uL15 (151 aa).

Positions 1 to 60 are disordered; the sequence is MAENSPLKAHNLRPAPGAKTAKTRVGRGEASKGKTAGRGTKGTKARYQVPERFEGGQMPL.

The protein belongs to the universal ribosomal protein uL15 family. As to quaternary structure, part of the 50S ribosomal subunit.

Binds to the 23S rRNA. This chain is Large ribosomal subunit protein uL15, found in Streptomyces griseus subsp. griseus (strain JCM 4626 / CBS 651.72 / NBRC 13350 / KCC S-0626 / ISP 5235).